The primary structure comprises 400 residues: MSVSPAAPASGIRRPCYLVLSAHDFRTPRRANIHFITDQLALRGTTRFFSLRYSRLSRMKGDMRLPLDDTANTVVSHNGVDCYLWRTTVHPFNTRRSWLRPVEDAMFRWYAAHPPKQLLDWMRESDVIVFESGIAVAFIELAKRVNPAAKLVYRASDGLSTINVASYIEREFDRVAPTLDVIALVSPAMAAEVASRDNVFHVGHGVDHNLDQLGDPSPYAEGIHAVAVGSMLFDPEFFVVASKAFPQVTFHVIGSGMGRHPGYGDNVIVYGEMKHAQTIGYIKHARFGIAPYASEQVPVYLADSSMKLLQYDFFGLPAVCPNAVVGPYKSRFGYTPGNADSVIAAITQALEAPRVRYRQCLNWSDTTDRVLDPRAYPETRLYPHPPTAAPQLSSEAALSH.

The Proton acceptor role is filled by Asp-157. UDP-alpha-D-glucuronate is bound by residues 230–231 (SM), 272–273 (EM), Tyr-292, and 306–310 (MKLLQ). The tract at residues 377–400 (PETRLYPHPPTAAPQLSSEAALSH) is disordered. Residues 390–400 (PQLSSEAALSH) are compositionally biased toward polar residues.

It belongs to the glycosyltransferase 70 family.

The protein resides in the cell inner membrane. The catalysed reaction is alpha-D-Man-(1-&gt;3)-beta-D-Glc-(1-&gt;4)-alpha-D-Glc-1-di-trans,octa-cis-undecaprenyl diphosphate + UDP-alpha-D-glucuronate = beta-D-GlcA-(1-&gt;2)-alpha-D-Man-(1-&gt;3)-beta-D-Glc-(1-&gt;4)-alpha-D-Glc-di-trans,octa-cis-undecaprenyl diphosphate + UDP + H(+). It functions in the pathway glycan biosynthesis; xanthan biosynthesis. Functionally, catalyzes the transfer of a glucuronic acid (GlcA) residue from UDP-glucuronate to mannose-alpha-1,3-glucose-beta-1,4-glucose-P-P-polyisoprenyl to form the lipid-linked tetrasaccharide GlcA-Man-Glc(2)-PP-Pol, with a glucuronic acid-beta-mannose linkage. Is involved in the biosynthesis of the exopolysaccharide xanthan, since it catalyzes the fourth glycosylation step in the assembly of the pentasaccharide-P-P-polyisoprenyl repeating unit of xanthan. Is unable to use the trisaccharide acceptor freed from the pyrophosphate lipid moiety. Does not show specificity for the lipidic portion of the acceptor. Shows diminished activity when tested with 6-O-acetyl-mannose-alpha-1,3-glucose-beta-1,4-glucose-P-P-polyisoprenyl, a putative intermediate in the synthesis of xanthan; this could indicate that acetylation of the internal mannose takes place after the formation of the GumK product. The polypeptide is UDP-glucuronate:glycolipid 2-beta-glucuronosyltransferase (gumK) (Xanthomonas campestris pv. campestris).